A 528-amino-acid polypeptide reads, in one-letter code: Tyrosine--tRNA ligase, cytoplasmic (528 aa).

Residue methionine 1 is modified to N-acetylmethionine. Glycine 2 is subject to N-acetylglycine; in Tyrosine--tRNA ligase, cytoplasmic, N-terminally processed. Residue tyrosine 39 participates in L-tyrosine binding. Tyrosine 39 is a binding site for trans-resveratrol. The 'HIGH' region motif lies at 44–52 (TTGKPHVAY). Tyrosine 166, glutamine 170, aspartate 173, and glutamine 188 together coordinate L-tyrosine. Residues glutamine 170 and aspartate 173 each coordinate trans-resveratrol. The residue at position 197 (lysine 197) is an N6-acetyllysine. Serine 205 is modified (phosphoserine). Lysine 206 is modified (N6-acetyllysine). The 'KMSKS' region motif lies at 222-226 (KMSSS). The Nuclear localization signal signature appears at 242–247 (KKKLKK). Residues 339–363 (AAYPDPSKQKPTAKGPAKSSEPEEI) are disordered. The 105-residue stretch at 364-468 (IPSRLDIRVG…AGSAPGERVF (105 aa)) folds into the tRNA-binding domain. Position 386 is a phosphoserine (serine 386). Residues lysine 474, lysine 482, and lysine 490 each carry the N6-acetyllysine modification.

The protein belongs to the class-I aminoacyl-tRNA synthetase family. Homodimer. Interacts (when binding to resveratrol) with PARP1; interaction stimulates the poly-ADP-ribosyltransferase activity of PARP1.

The protein resides in the cytoplasm. Its subcellular location is the nucleus. It carries out the reaction tRNA(Tyr) + L-tyrosine + ATP = L-tyrosyl-tRNA(Tyr) + AMP + diphosphate + H(+). With respect to regulation, resveratrol strongly inhibits the tyrosine--tRNA ligase activity. Tyrosine--tRNA ligase that catalyzes the attachment of tyrosine to tRNA(Tyr) in a two-step reaction: tyrosine is first activated by ATP to form Tyr-AMP and then transferred to the acceptor end of tRNA(Tyr). Also acts as a positive regulator of poly-ADP-ribosylation in the nucleus, independently of its tyrosine--tRNA ligase activity. Activity is switched upon resveratrol-binding: resveratrol strongly inhibits the tyrosine--tRNA ligase activity and promotes relocalization to the nucleus, where YARS1 specifically stimulates the poly-ADP-ribosyltransferase activity of PARP1. The polypeptide is Tyrosine--tRNA ligase, cytoplasmic (Yars1) (Rattus norvegicus (Rat)).